Reading from the N-terminus, the 453-residue chain is Aspartate aminotransferase, chloroplastic (453 aa).

Residues 1-44 constitute a chloroplast transit peptide; the sequence is MASLMLSLGSTSLLPREINKDKLKLGTSASNPFLKAKSFSRVTM. 3 residues coordinate L-aspartate: Gly-85, Trp-181, and Asn-234. Lys-298 carries the post-translational modification N6-(pyridoxal phosphate)lysine. Residue Arg-427 coordinates L-aspartate.

This sequence belongs to the class-I pyridoxal-phosphate-dependent aminotransferase family. In terms of assembly, homodimer. The cofactor is pyridoxal 5'-phosphate.

It is found in the plastid. The protein resides in the chloroplast. Its subcellular location is the amyloplast. The enzyme catalyses L-aspartate + 2-oxoglutarate = oxaloacetate + L-glutamate. Its function is as follows. Amino acid aminotransferase important for the metabolism of amino acids and Krebs-cycle related organic acids. No activity with D-Asp or D-Ala as amino donors. In plants, it is involved in nitrogen metabolism and in aspects of carbon and energy metabolism. This is Aspartate aminotransferase, chloroplastic (ASP5) from Arabidopsis thaliana (Mouse-ear cress).